The sequence spans 116 residues: Large ribosomal subunit protein uL18 (116 aa).

Belongs to the universal ribosomal protein uL18 family. In terms of assembly, part of the 50S ribosomal subunit; part of the 5S rRNA/L5/L18/L25 subcomplex. Contacts the 5S and 23S rRNAs.

In terms of biological role, this is one of the proteins that bind and probably mediate the attachment of the 5S RNA into the large ribosomal subunit, where it forms part of the central protuberance. This chain is Large ribosomal subunit protein uL18, found in Marinomonas sp. (strain MWYL1).